Consider the following 827-residue polypeptide: SID1 transmembrane family member 1 (827 aa).

The first 19 residues, 1–19 (MLDCLRLALLCALPWLLRA), serve as a signal peptide directing secretion. Over 20–309 (AVPGHQEEPL…SIKESVYVKS (290 aa)) the chain is Extracellular. N-linked (GlcNAc...) asparagine glycosylation is found at Asn67, Asn83, Asn136, and Asn282. A helical transmembrane segment spans residues 310 to 330 (SLFSIFVFLSFYLGCLLVVLV). The Cytoplasmic segment spans residues 331-442 (HHVRFQRKSI…DRRIVSKKYK (112 aa)). Positions 344–409 (FGSSDGSGNM…VEESDFDTMP (66 aa)) are disordered. Low complexity predominate over residues 375–386 (SSSSPGRQMSSS). Residues 398–409 (SSVEESDFDTMP) are compositionally biased toward acidic residues. The chain crosses the membrane as a helical span at residues 443-463 (IYFWNIITIAVFYALPVMQLV). Topologically, residues 464–494 (ITYQTVVNVTGNQDICYYNFLCAHPLGVLSA) are extracellular. An N-linked (GlcNAc...) asparagine glycan is attached at Asn471. The chain crosses the membrane as a helical span at residues 495–515 (FNNILSNLGHVLLGFLFLLIV). The Cytoplasmic segment spans residues 516–541 (LRRDLLHRRALEAKDIFAMEYGIPKH). The chain crosses the membrane as a helical span at residues 542-562 (FGLFYAMGIALMMEGVLSACY). Over 563–572 (HVCPNYSNFQ) the chain is Extracellular. A glycan (N-linked (GlcNAc...) asparagine) is linked at Asn567. The chain crosses the membrane as a helical span at residues 573-590 (FDTSFMYMIAGLCMLKLY). The Cytoplasmic portion of the chain corresponds to 591–600 (QTRHPDINAS). Residues 601 to 621 (AYSAYASFAVVITLTVLGVVF) traverse the membrane as a helical segment. Over 622 to 626 (GKNDV) the chain is Extracellular. Residues 627-647 (WFWIIFSAIHILSSLALSTQI) traverse the membrane as a helical segment. Topologically, residues 648–683 (YYMGRFKIDLGIFRRAAMVFYTDCIQQCSRPLYMDR) are cytoplasmic. The helical transmembrane segment at 684–704 (MVLLIVGNLVNWSFAFFGLIY) threads the bilayer. Over 705-710 (RPRDFA) the chain is Extracellular. Residues 711–731 (SYMLGIFICNLLLYLAFYIIM) traverse the membrane as a helical segment. Over 732–741 (KLRSSEKVLP) the chain is Cytoplasmic. A helical membrane pass occupies residues 742–762 (LPVFCIAATAVVWAAALYFFF). The Extracellular portion of the chain corresponds to 763–791 (QNLSSWEGTPAESREKNRECVLLDFFDDH). Asn764 is a glycosylation site (N-linked (GlcNAc...) asparagine). A helical transmembrane segment spans residues 792 to 812 (DIWHFLSATALFFSFLVLLTL). At 813–827 (DDDLDVVRRDQIPVF) the chain is on the cytoplasmic side.

The protein belongs to the SID1 family.

It localises to the membrane. Functionally, in vitro binds long double-stranded RNA (dsRNA) (500 and 700 base pairs), but not dsRNA shorter than 300 bp. Not involved in RNA autophagy, a process in which RNA is directly imported into lysosomes in an ATP-dependent manner, and degraded. In Mus musculus (Mouse), this protein is SID1 transmembrane family member 1 (Sidt1).